The chain runs to 137 residues: uncharacterized protein (137 aa).

The HTH marR-type domain maps to 5-136 (NRHLIHQINQ…FSHLFRMFLQ (132 aa)). Residues 51-74 (QKEIWSYLNVEAPTVTRTIKRLEE) constitute a DNA-binding region (H-T-H motif).

This is an uncharacterized protein from Bacillus subtilis (strain 168).